The chain runs to 359 residues: 3-dehydroquinate synthase (359 aa).

Residues 71 to 76 (DGEQFK), 105 to 109 (GVIGD), 129 to 130 (TT), K142, K151, and 169 to 172 (CLQT) each bind NAD(+). 3 residues coordinate Zn(2+): E184, H247, and H264.

The protein belongs to the sugar phosphate cyclases superfamily. Dehydroquinate synthase family. Requires NAD(+) as cofactor. It depends on Co(2+) as a cofactor. Zn(2+) is required as a cofactor.

It localises to the cytoplasm. The enzyme catalyses 7-phospho-2-dehydro-3-deoxy-D-arabino-heptonate = 3-dehydroquinate + phosphate. It functions in the pathway metabolic intermediate biosynthesis; chorismate biosynthesis; chorismate from D-erythrose 4-phosphate and phosphoenolpyruvate: step 2/7. Its function is as follows. Catalyzes the conversion of 3-deoxy-D-arabino-heptulosonate 7-phosphate (DAHP) to dehydroquinate (DHQ). This chain is 3-dehydroquinate synthase, found in Shewanella oneidensis (strain ATCC 700550 / JCM 31522 / CIP 106686 / LMG 19005 / NCIMB 14063 / MR-1).